A 531-amino-acid polypeptide reads, in one-letter code: Light-independent protochlorophyllide reductase subunit B (531 aa).

Position 36 (Asp36) interacts with [4Fe-4S] cluster. The Proton donor role is filled by Asp296. 431 to 432 contributes to the substrate binding site; the sequence is GM.

This sequence belongs to the ChlB/BchB/BchZ family. In terms of assembly, protochlorophyllide reductase is composed of three subunits; ChlL, ChlN and ChlB. Forms a heterotetramer of two ChlB and two ChlN subunits. [4Fe-4S] cluster serves as cofactor.

It localises to the plastid. It is found in the chloroplast. It carries out the reaction chlorophyllide a + oxidized 2[4Fe-4S]-[ferredoxin] + 2 ADP + 2 phosphate = protochlorophyllide a + reduced 2[4Fe-4S]-[ferredoxin] + 2 ATP + 2 H2O. The protein operates within porphyrin-containing compound metabolism; chlorophyll biosynthesis (light-independent). Component of the dark-operative protochlorophyllide reductase (DPOR) that uses Mg-ATP and reduced ferredoxin to reduce ring D of protochlorophyllide (Pchlide) to form chlorophyllide a (Chlide). This reaction is light-independent. The NB-protein (ChlN-ChlB) is the catalytic component of the complex. The polypeptide is Light-independent protochlorophyllide reductase subunit B (Nephroselmis olivacea (Green alga)).